Here is a 154-residue protein sequence, read N- to C-terminus: Egg-lysin (154 aa).

A signal peptide spans 1–18 (MKLFVLCIFAMMATLAMS).

Homodimer. In terms of tissue distribution, sperm.

Its function is as follows. Dissolves the egg vitelline layer nonenzymatically during fertilization. It creates a hole of about 3 mu-m in diameter through which the sperm pass. In Haliotis kamtschatkana (Pinto abalone), this protein is Egg-lysin.